Reading from the N-terminus, the 121-residue chain is Large ribosomal subunit protein bL12 (121 aa).

It belongs to the bacterial ribosomal protein bL12 family. In terms of assembly, homodimer. Part of the ribosomal stalk of the 50S ribosomal subunit. Forms a multimeric L10(L12)X complex, where L10 forms an elongated spine to which 2 to 4 L12 dimers bind in a sequential fashion. Binds GTP-bound translation factors.

In terms of biological role, forms part of the ribosomal stalk which helps the ribosome interact with GTP-bound translation factors. Is thus essential for accurate translation. This Proteus mirabilis (strain HI4320) protein is Large ribosomal subunit protein bL12.